Reading from the N-terminus, the 744-residue chain is Elongation factor G, mitochondrial (744 aa).

The transit peptide at 1-33 (MTISNLIRSRCSLAAAKSFLENVKSFSSHATFA) directs the protein to the mitochondrion. The tr-type G domain occupies 39-317 (EKIRNIGISA…VLDYLPHPGE (279 aa)). Residues 48 to 55 (AHIDSGKT), 115 to 119 (DTPGH), and 169 to 172 (NKLD) each bind GTP.

It belongs to the TRAFAC class translation factor GTPase superfamily. Classic translation factor GTPase family. EF-G/EF-2 subfamily.

It localises to the mitochondrion. It participates in protein biosynthesis; polypeptide chain elongation. Mitochondrial GTPase that catalyzes the GTP-dependent ribosomal translocation step during translation elongation. During this step, the ribosome changes from the pre-translocational (PRE) to the post-translocational (POST) state as the newly formed A-site-bound peptidyl-tRNA and P-site-bound deacylated tRNA move to the P and E sites, respectively. Catalyzes the coordinated movement of the two tRNA molecules, the mRNA and conformational changes in the ribosome. The sequence is that of Elongation factor G, mitochondrial from Anopheles gambiae (African malaria mosquito).